The following is a 468-amino-acid chain: Citrate synthase, mitochondrial (468 aa).

The N-terminal 30 residues, 1 to 30 (MSLISAGRVCARILGAKNSPCALIAARQAS), are a transit peptide targeting the mitochondrion. Active-site residues include His303 and His349. Arg358 lines the oxaloacetate pocket. Asp404 is an active-site residue. Oxaloacetate-binding residues include Arg430 and Arg450.

It belongs to the citrate synthase family. In terms of assembly, homodimer.

Its subcellular location is the mitochondrion matrix. The enzyme catalyses oxaloacetate + acetyl-CoA + H2O = citrate + CoA + H(+). It participates in carbohydrate metabolism; tricarboxylic acid cycle; isocitrate from oxaloacetate: step 1/2. Functionally, key enzyme of the Krebs tricarboxylic acid cycle which catalyzes the synthesis of citrate from acetyl coenzyme A and oxaloacetate. The polypeptide is Citrate synthase, mitochondrial (cs) (Xenopus laevis (African clawed frog)).